The sequence spans 386 residues: PqqA peptide cyclase (386 aa).

Residues 9 to 228 (SKPPLWLLAE…RQYIDQHHLK (220 aa)) form the Radical SAM core domain. Residues C23, C27, and C30 each coordinate [4Fe-4S] cluster.

This sequence belongs to the radical SAM superfamily. PqqE family. As to quaternary structure, interacts with PqqD. The interaction is necessary for activity of PqqE. [4Fe-4S] cluster serves as cofactor.

It catalyses the reaction [PQQ precursor protein] + S-adenosyl-L-methionine = E-Y cross-linked-[PQQ precursor protein] + 5'-deoxyadenosine + L-methionine + H(+). The protein operates within cofactor biosynthesis; pyrroloquinoline quinone biosynthesis. Catalyzes the cross-linking of a glutamate residue and a tyrosine residue in the PqqA protein as part of the biosynthesis of pyrroloquinoline quinone (PQQ). The chain is PqqA peptide cyclase from Acinetobacter baylyi (strain ATCC 33305 / BD413 / ADP1).